The primary structure comprises 196 residues: ATP-dependent Clp protease proteolytic subunit (196 aa).

The active-site Nucleophile is serine 96. The active site involves histidine 121.

This sequence belongs to the peptidase S14 family. In terms of assembly, fourteen ClpP subunits assemble into 2 heptameric rings which stack back to back to give a disk-like structure with a central cavity, resembling the structure of eukaryotic proteasomes.

It is found in the cytoplasm. It catalyses the reaction Hydrolysis of proteins to small peptides in the presence of ATP and magnesium. alpha-casein is the usual test substrate. In the absence of ATP, only oligopeptides shorter than five residues are hydrolyzed (such as succinyl-Leu-Tyr-|-NHMec, and Leu-Tyr-Leu-|-Tyr-Trp, in which cleavage of the -Tyr-|-Leu- and -Tyr-|-Trp bonds also occurs).. Functionally, cleaves peptides in various proteins in a process that requires ATP hydrolysis. Has a chymotrypsin-like activity. Plays a major role in the degradation of misfolded proteins. In Streptococcus pneumoniae (strain ATCC 700669 / Spain 23F-1), this protein is ATP-dependent Clp protease proteolytic subunit.